The sequence spans 404 residues: Pectate lyase E (404 aa).

The signal sequence occupies residues 1–41; the sequence is MNNSRMSSVSTQKTTGRSALGTKSALAAIIATTMMVSVASA. Aspartate 182 and aspartate 225 together coordinate Ca(2+). Arginine 278 is an active-site residue.

Belongs to the polysaccharide lyase 1 family. PLBC subfamily. Ca(2+) is required as a cofactor.

Its subcellular location is the secreted. The enzyme catalyses Eliminative cleavage of (1-&gt;4)-alpha-D-galacturonan to give oligosaccharides with 4-deoxy-alpha-D-galact-4-enuronosyl groups at their non-reducing ends.. It participates in glycan metabolism; pectin degradation; 2-dehydro-3-deoxy-D-gluconate from pectin: step 2/5. Its function is as follows. Involved in maceration and soft-rotting of plant tissue. Pectate lyases have been implicated as pathogenicity factors which induce maceration or rotting of plant tissue. PelE is sufficient to induce these effects under laboratory conditions. The sequence is that of Pectate lyase E (pelE) from Dickeya dadantii (strain 3937) (Erwinia chrysanthemi (strain 3937)).